The following is a 370-amino-acid chain: Protein maelstrom 2 (370 aa).

Residues 2–68 constitute a DNA-binding region (HMG box); that stretch reads AQNKPNAFMA…VLERESKTER (67 aa).

This sequence belongs to the maelstrom family.

Its subcellular location is the cytoplasm. The protein resides in the nucleus. Functionally, involved both in the piRNA and miRNA metabolic processes. As a component of the meiotic nuage, plays a central role during oogenesis by repressing transposable elements and preventing their mobilization, which is essential for the germline integrity. Repression of transposable elements is mediated via the piRNA metabolic process, which mediates the repression of transposable elements during meiosis by forming complexes composed of piRNAs and Piwi proteins and governs the repression of transposons. As a nuclear component, it is required for proper differentiation in the germline stem cell (GSC) lineage by repressing microRNA-7 (miR-7), thereby acting as an indirect regulator of bag-of-marbles (Bam). Acts by binding to the promoter of miR-7 gene and repressing its expression; miR-7 repression alleviates the Bam repression by miR-7, thereby allowing differentiation in the germline stem cell (GSC) lineage. The chain is Protein maelstrom 2 (mael2) from Drosophila pseudoobscura pseudoobscura (Fruit fly).